The sequence spans 513 residues: ATP synthase subunit alpha (513 aa).

ATP is bound at residue 169–176 (GDRQTGKT).

This sequence belongs to the ATPase alpha/beta chains family. As to quaternary structure, F-type ATPases have 2 components, CF(1) - the catalytic core - and CF(0) - the membrane proton channel. CF(1) has five subunits: alpha(3), beta(3), gamma(1), delta(1), epsilon(1). CF(0) has three main subunits: a(1), b(2) and c(9-12). The alpha and beta chains form an alternating ring which encloses part of the gamma chain. CF(1) is attached to CF(0) by a central stalk formed by the gamma and epsilon chains, while a peripheral stalk is formed by the delta and b chains.

The protein resides in the cell inner membrane. The catalysed reaction is ATP + H2O + 4 H(+)(in) = ADP + phosphate + 5 H(+)(out). Its function is as follows. Produces ATP from ADP in the presence of a proton gradient across the membrane. The alpha chain is a regulatory subunit. The chain is ATP synthase subunit alpha from Yersinia enterocolitica serotype O:8 / biotype 1B (strain NCTC 13174 / 8081).